The chain runs to 251 residues: Endonuclease NucS (251 aa).

Residues 230 to 240 (LEPPKKGNEKR) are compositionally biased toward basic and acidic residues. Positions 230–251 (LEPPKKGNEKRSKQKTLDFFTP) are disordered.

The protein belongs to the NucS endonuclease family. In terms of assembly, homodimer. Interacts with PCNA.

The protein resides in the cytoplasm. Activity is modulated by PCNA. PCNA increases the binding affinity of NucS towards ssDNA as well as branched DNA substrates carrying either 3' or 5' flaps. PCNA is also required for optimal loading of NucS on its substrates and to direct activity towards ss/dsDNA junction. Functionally, cleaves both 3' and 5' ssDNA extremities of branched DNA structures. Binds to ssDNA. This Pyrococcus abyssi (strain GE5 / Orsay) protein is Endonuclease NucS.